The sequence spans 183 residues: Ribulose bisphosphate carboxylase small subunit, chloroplastic 1 (183 aa).

A chloroplast-targeting transit peptide spans 1 to 58 (MASSMLSNAAMATTAATAGAQASMVAPFNGLKSFATFPITKKSSNDFSSLPSNGGRVQ).

This sequence belongs to the RuBisCO small chain family. Heterohexadecamer of 8 large and 8 small subunits.

Its subcellular location is the plastid. It localises to the chloroplast. RuBisCO catalyzes two reactions: the carboxylation of D-ribulose 1,5-bisphosphate, the primary event in carbon dioxide fixation, as well as the oxidative fragmentation of the pentose substrate. Both reactions occur simultaneously and in competition at the same active site. Although the small subunit is not catalytic it is essential for maximal activity. The polypeptide is Ribulose bisphosphate carboxylase small subunit, chloroplastic 1 (Amaranthus hypochondriacus (Prince-of-Wales feather)).